The sequence spans 256 residues: Autophagy-related protein 40 (256 aa).

The signal sequence occupies residues 1 to 16 (MFNLILWPLFLLTSVA). The Lumenal segment spans residues 17-67 (IPLQLTLEVVYLTSSVDFSKASAAKTATSLGQSPVVITIYKSLLKYWSLYE). A helical membrane pass occupies residues 68-88 (FIHFIYLYTPIDAFLNFLPFT). Topologically, residues 89-256 (SLLMSFGSIC…DILDETTELD (168 aa)) are cytoplasmic. The tract at residues 197 to 243 (QPQGDKNRYQNGDRESTKNGAAYQKSSQQSSSFEQNFTSTEFPNDYD) is disordered. The segment covering 199 to 213 (QGDKNRYQNGDREST) has biased composition (basic and acidic residues). Over residues 222–238 (SSQQSSSFEQNFTSTEF) the composition is skewed to low complexity. The ATG8-binding signature appears at 242 to 245 (YDFM).

As to quaternary structure, interacts with ATG8 and ATG11.

It localises to the endoplasmic reticulum membrane. Its subcellular location is the preautophagosomal structure membrane. In terms of biological role, acts as a receptor for reticulophagy. Directs autophagic sequestration of folded tubules/sheets derived from the cortical endoplasmic reticulum (cER) and the cytoplasmic endoplasmic reticulum (cytoER) into autophagosomes. Is not required for the cytoplasm-to-vacuole targeting pathway, mitophagy, pexophagy, and non-selective autophagy. In Saccharomyces cerevisiae (strain ATCC 204508 / S288c) (Baker's yeast), this protein is Autophagy-related protein 40.